Here is a 422-residue protein sequence, read N- to C-terminus: Glucose-1-phosphate adenylyltransferase (422 aa).

Alpha-D-glucose 1-phosphate-binding positions include tyrosine 108, glycine 173, 188–189, and serine 206; that span reads EK.

Belongs to the bacterial/plant glucose-1-phosphate adenylyltransferase family. Homotetramer.

The catalysed reaction is alpha-D-glucose 1-phosphate + ATP + H(+) = ADP-alpha-D-glucose + diphosphate. The protein operates within glycan biosynthesis; glycogen biosynthesis. Involved in the biosynthesis of ADP-glucose, a building block required for the elongation reactions to produce glycogen. Catalyzes the reaction between ATP and alpha-D-glucose 1-phosphate (G1P) to produce pyrophosphate and ADP-Glc. The protein is Glucose-1-phosphate adenylyltransferase of Paraburkholderia phymatum (strain DSM 17167 / CIP 108236 / LMG 21445 / STM815) (Burkholderia phymatum).